We begin with the raw amino-acid sequence, 209 residues long: Large ribosomal subunit protein uL4 (209 aa).

Residues 50 to 78 are disordered; the sequence is STLKKGEVSGGGKKPYQQKHTGRARQGSI.

Belongs to the universal ribosomal protein uL4 family. As to quaternary structure, part of the 50S ribosomal subunit.

One of the primary rRNA binding proteins, this protein initially binds near the 5'-end of the 23S rRNA. It is important during the early stages of 50S assembly. It makes multiple contacts with different domains of the 23S rRNA in the assembled 50S subunit and ribosome. In terms of biological role, forms part of the polypeptide exit tunnel. This chain is Large ribosomal subunit protein uL4, found in Mycoplasmoides gallisepticum (strain R(low / passage 15 / clone 2)) (Mycoplasma gallisepticum).